The chain runs to 654 residues: tRNA uridine 5-carboxymethylaminomethyl modification enzyme MnmG (654 aa).

17 to 22 (GGGHAG) provides a ligand contact to FAD. An NAD(+)-binding site is contributed by 289–303 (GPRYCPSIEDKIVKF).

Belongs to the MnmG family. In terms of assembly, homodimer. Heterotetramer of two MnmE and two MnmG subunits. FAD serves as cofactor.

Its subcellular location is the cytoplasm. In terms of biological role, NAD-binding protein involved in the addition of a carboxymethylaminomethyl (cmnm) group at the wobble position (U34) of certain tRNAs, forming tRNA-cmnm(5)s(2)U34. The protein is tRNA uridine 5-carboxymethylaminomethyl modification enzyme MnmG of Prochlorococcus marinus subsp. pastoris (strain CCMP1986 / NIES-2087 / MED4).